The chain runs to 382 residues: Na(+)/H(+) antiporter NhaA (382 aa).

The next 10 membrane-spanning stretches (helical) occupy residues 5–25, 42–62, 88–108, 116–136, 145–165, 169–189, 261–281, 282–302, 327–347, and 353–373; these read INLL…ALAW, FGGV…FFGI, LATL…NAVI, GWGI…RLVF, FLLL…AVFY, VHPT…AAYI, IVVD…RFSS, VGTA…AGIL, TGLV…VAFV, and GAAK…VALG.

It belongs to the NhaA Na(+)/H(+) (TC 2.A.33) antiporter family.

It localises to the cell inner membrane. The catalysed reaction is Na(+)(in) + 2 H(+)(out) = Na(+)(out) + 2 H(+)(in). Its function is as follows. Na(+)/H(+) antiporter that extrudes sodium in exchange for external protons. This chain is Na(+)/H(+) antiporter NhaA, found in Geobacter metallireducens (strain ATCC 53774 / DSM 7210 / GS-15).